Consider the following 361-residue polypeptide: Holliday junction branch migration complex subunit RuvB (361 aa).

Residues 1-12 (MNWDETGPETDE) are compositionally biased toward acidic residues. The segment at 1–21 (MNWDETGPETDEPTGPVLDDR) is disordered. The segment at 13-199 (PTGPVLDDRL…FGFTGHMEFY (187 aa)) is large ATPase domain (RuvB-L). ATP is bound by residues leucine 38, arginine 39, glycine 80, lysine 83, threonine 84, threonine 85, 146–148 (EDF), arginine 189, tyrosine 199, and arginine 236. Threonine 84 contributes to the Mg(2+) binding site. Positions 200–270 (APAELERVLH…IAMAALKVYE (71 aa)) are small ATPAse domain (RuvB-S). A head domain (RuvB-H) region spans residues 273–361 (ARGLDRLDRA…AKGQQGLFGA (89 aa)). Arginine 309, arginine 328, and arginine 333 together coordinate DNA.

The protein belongs to the RuvB family. As to quaternary structure, homohexamer. Forms an RuvA(8)-RuvB(12)-Holliday junction (HJ) complex. HJ DNA is sandwiched between 2 RuvA tetramers; dsDNA enters through RuvA and exits via RuvB. An RuvB hexamer assembles on each DNA strand where it exits the tetramer. Each RuvB hexamer is contacted by two RuvA subunits (via domain III) on 2 adjacent RuvB subunits; this complex drives branch migration. In the full resolvosome a probable DNA-RuvA(4)-RuvB(12)-RuvC(2) complex forms which resolves the HJ.

The protein resides in the cytoplasm. The catalysed reaction is ATP + H2O = ADP + phosphate + H(+). Its function is as follows. The RuvA-RuvB-RuvC complex processes Holliday junction (HJ) DNA during genetic recombination and DNA repair, while the RuvA-RuvB complex plays an important role in the rescue of blocked DNA replication forks via replication fork reversal (RFR). RuvA specifically binds to HJ cruciform DNA, conferring on it an open structure. The RuvB hexamer acts as an ATP-dependent pump, pulling dsDNA into and through the RuvAB complex. RuvB forms 2 homohexamers on either side of HJ DNA bound by 1 or 2 RuvA tetramers; 4 subunits per hexamer contact DNA at a time. Coordinated motions by a converter formed by DNA-disengaged RuvB subunits stimulates ATP hydrolysis and nucleotide exchange. Immobilization of the converter enables RuvB to convert the ATP-contained energy into a lever motion, pulling 2 nucleotides of DNA out of the RuvA tetramer per ATP hydrolyzed, thus driving DNA branch migration. The RuvB motors rotate together with the DNA substrate, which together with the progressing nucleotide cycle form the mechanistic basis for DNA recombination by continuous HJ branch migration. Branch migration allows RuvC to scan DNA until it finds its consensus sequence, where it cleaves and resolves cruciform DNA. This chain is Holliday junction branch migration complex subunit RuvB, found in Streptomyces griseus subsp. griseus (strain JCM 4626 / CBS 651.72 / NBRC 13350 / KCC S-0626 / ISP 5235).